Consider the following 432-residue polypeptide: GTPase Obg (432 aa).

An Obg domain is found at 1–159 (MKFIDTAKFT…YEVKAELKVL (159 aa)). The OBG-type G domain occupies 160-332 (ADVGFVGLPN…LLLKIAKELE (173 aa)). GTP is bound by residues 166–173 (GLPNAGKS), 191–195 (FTTLN), 213–216 (DLPG), 284–287 (NKMD), and 313–315 (SGL). S173 and T193 together coordinate Mg(2+). One can recognise an OCT domain in the interval 354–432 (RLEEDEEDIQ…VFEYELEWMD (79 aa)).

The protein belongs to the TRAFAC class OBG-HflX-like GTPase superfamily. OBG GTPase family. In terms of assembly, monomer. The cofactor is Mg(2+).

It localises to the cytoplasm. In terms of biological role, an essential GTPase which binds GTP, GDP and possibly (p)ppGpp with moderate affinity, with high nucleotide exchange rates and a fairly low GTP hydrolysis rate. Plays a role in control of the cell cycle, stress response, ribosome biogenesis and in those bacteria that undergo differentiation, in morphogenesis control. This chain is GTPase Obg, found in Mesoplasma florum (strain ATCC 33453 / NBRC 100688 / NCTC 11704 / L1) (Acholeplasma florum).